The primary structure comprises 72 residues: DNA-directed RNA polymerase subunit epsilon (72 aa).

Belongs to the RNA polymerase subunit epsilon family. In terms of assembly, RNAP is composed of a core of 2 alpha, a beta and a beta' subunit. The core is associated with a delta subunit, and at least one of epsilon or omega. When a sigma factor is associated with the core the holoenzyme is formed, which can initiate transcription.

The enzyme catalyses RNA(n) + a ribonucleoside 5'-triphosphate = RNA(n+1) + diphosphate. In terms of biological role, a non-essential component of RNA polymerase (RNAP). The chain is DNA-directed RNA polymerase subunit epsilon from Staphylococcus aureus (strain JH1).